Consider the following 438-residue polypeptide: Histidinol dehydrogenase (438 aa).

Tyr-135, Gln-193, and Asn-216 together coordinate NAD(+). Residues Ser-243, Gln-265, and His-268 each contribute to the substrate site. Residues Gln-265 and His-268 each contribute to the Zn(2+) site. Residues Glu-332 and His-333 each act as proton acceptor in the active site. Substrate-binding residues include His-333, Asp-366, Glu-420, and His-425. Residue Asp-366 participates in Zn(2+) binding. His-425 is a Zn(2+) binding site.

This sequence belongs to the histidinol dehydrogenase family. Zn(2+) serves as cofactor.

The enzyme catalyses L-histidinol + 2 NAD(+) + H2O = L-histidine + 2 NADH + 3 H(+). The protein operates within amino-acid biosynthesis; L-histidine biosynthesis; L-histidine from 5-phospho-alpha-D-ribose 1-diphosphate: step 9/9. Functionally, catalyzes the sequential NAD-dependent oxidations of L-histidinol to L-histidinaldehyde and then to L-histidine. The sequence is that of Histidinol dehydrogenase from Shewanella oneidensis (strain ATCC 700550 / JCM 31522 / CIP 106686 / LMG 19005 / NCIMB 14063 / MR-1).